A 169-amino-acid polypeptide reads, in one-letter code: General odorant-binding protein 57a (169 aa).

The N-terminal stretch at 1 to 20 (MFNTRLAIFLLLIVVSLSQA) is a signal peptide. Disulfide bonds link cysteine 39–cysteine 77, cysteine 73–cysteine 120, and cysteine 111–cysteine 129.

This sequence belongs to the PBP/GOBP family.

Present in the aqueous fluid surrounding olfactory sensory dendrites and are thought to aid in the capture and transport of hydrophobic odorants into and through this fluid. The protein is General odorant-binding protein 57a of Drosophila melanogaster (Fruit fly).